The chain runs to 525 residues: Cytochrome P450 monooxygenase tpcC (525 aa).

The helical transmembrane segment at 13 to 33 (LPVTLVSLLVGSIFYFCYLTV) threads the bilayer. C457 serves as a coordination point for heme.

The protein belongs to the cytochrome P450 family. Heme serves as cofactor.

The protein resides in the membrane. It participates in secondary metabolite biosynthesis; terpenoid biosynthesis. In terms of biological role, cytochrome P450 monooxygenase; part of the gene cluster that mediates the biosynthesis of terpestacin. The bifunctional terpene synthase tpcA converts isopentenyl diphosphate (IPP) and dimethylallyl diphosphate (DMAPP) into the sesterterpene preterpestacin I. The C-terminal prenyltransferase (PT) domain of tpcA catalyzes formation of GFPP, whereas the N-terminal terpene cyclase (TC) domain catalyzes the cyclization of GFPP into preterpestacin I. The cytochrome P450 monooxygenase tpcB then hydroxylates preterpestacin I to yield 24-hydroxypreterpstacin I (renamed as preterpestacin II) whereas the cytochrome P450 monooxygenase tpcC further hydroxylates preterpestacin II to yield 16,17-dihydroxypreterpestacin II (renamed as preterpestacin III). Finally, the FAD-dependent monooxygenase tpcD converts preterpestacin III into terpestacin. In Cochliobolus heterostrophus (strain C5 / ATCC 48332 / race O) (Southern corn leaf blight fungus), this protein is Cytochrome P450 monooxygenase tpcC.